Consider the following 568-residue polypeptide: MKRFALSLLAGLVALQASAATPDRLTIVNQYVDNVLTKAGDHYHGQSPTPLLADGVDPRTGKQMEWIFPDGRHAVLSNFSAQQNLMRVLVGLSNLSGNPSYKQRAEAIVKYHFQHYQDESGLLIWGGHRFVDLKTLQPEGPSEKEMVHELKNAYPYYDLMFSVDKDATARFIRGFWNAHVYDWKIMETSRHGKYGQKIGALWQSPFEQQPPFFATKGLSFLNAGNDLIYSASLLYKYNKEDGALVWAKRLAQQYVLPRDKATGLGVYQFTQALKRDETTDDADTHSKYGDRAQRQFGPEFGPTALEGNMMLKGRTSTIYSENALMQLQLGKDLGAEGKELLTWTTDGLKAFAKYAYNESDNTFRPMLANGKDLSNYVLPRDGYYGKKGTVIKPYPADNSFLLSYARAYTVLPDAELWRVARGIARAQGLGELGSAPGKDVKVDLATKNNDPYALFALLDLYQASKVKDYLSLAEKVGDNIISTRYQNGFFMAEPNRQYADVDTIEPYALLALEAAVRNQPQSVAPFLNGAGFTEGGYRMEDGSTRVSTRDNEIFLLNVGETLKPNNKK.

Positions 1 to 19 are cleaved as a signal peptide; that stretch reads MKRFALSLLAGLVALQASA.

It belongs to the polysaccharide lyase 2 family.

It localises to the periplasm. The catalysed reaction is Eliminative cleavage of (1-&gt;4)-alpha-D-galacturonan to give oligosaccharides with 4-deoxy-alpha-D-galact-4-enuronosyl groups at their non-reducing ends.. The protein operates within glycan metabolism; pectin degradation; 2-dehydro-3-deoxy-D-gluconate from pectin: step 2/5. The sequence is that of Periplasmic pectate lyase (pelB) from Pectobacterium carotovorum subsp. carotovorum (Erwinia carotovora subsp. carotovora).